Here is a 219-residue protein sequence, read N- to C-terminus: Cytidylate kinase (219 aa).

10-18 (GPAAAGKST) serves as a coordination point for ATP.

It belongs to the cytidylate kinase family. Type 1 subfamily.

The protein localises to the cytoplasm. The enzyme catalyses CMP + ATP = CDP + ADP. The catalysed reaction is dCMP + ATP = dCDP + ADP. The polypeptide is Cytidylate kinase (Staphylococcus aureus (strain JH9)).